The chain runs to 294 residues: StAR-related lipid transfer protein 3 (294 aa).

The 66-residue stretch at D1 to S66 folds into the MENTAL domain. Residues Q55–E61 carry the FFAT motif. A disordered region spans residues S58 to R77. The region spanning A79–S292 is the START domain.

The protein belongs to the STARD3 family. In terms of assembly, homodimer. Post-translationally, phosphorylated. Phosphorylation allows the tethering of two membranes that participates in the formation of ER-endosome contacts. Phosphorylation of FFAT motif drives membrane tethering between the endoplasmic reticulum and late endosomes that in turn allows the efficient transport of sterol mediated by the START domain.

Its subcellular location is the late endosome membrane. It catalyses the reaction cholesterol(in) = cholesterol(out). Functionally, sterol-binding protein that mediates cholesterol transport from the endoplasmic reticulum to endosomes. The sterol transport mechanism is triggered by phosphorylation of FFAT motif that leads to membrane tethering between the endoplasmic reticulum and late endosomes. Acts as a lipid transfer protein that redirects sterol to the endosome at the expense of the cell membrane and favors membrane formation inside endosomes. This is StAR-related lipid transfer protein 3 from Salvelinus fontinalis (Brook trout).